Consider the following 461-residue polypeptide: Asparagine--tRNA ligase (461 aa).

This sequence belongs to the class-II aminoacyl-tRNA synthetase family. Homodimer.

It localises to the cytoplasm. The catalysed reaction is tRNA(Asn) + L-asparagine + ATP = L-asparaginyl-tRNA(Asn) + AMP + diphosphate + H(+). This is Asparagine--tRNA ligase from Nitratidesulfovibrio vulgaris (strain DP4) (Desulfovibrio vulgaris).